Consider the following 477-residue polypeptide: Bifunctional protein HldE (477 aa).

The ribokinase stretch occupies residues 1–318; sequence MKVTLPEFER…ENAVRGRADT (318 aa). Residue Lys-179 is modified to N6-acetyllysine. 195–198 provides a ligand contact to ATP; that stretch reads NLSE. The active site involves Asp-264. The tract at residues 344–477 is cytidylyltransferase; the sequence is MTNGVFDILH…IKKIQQDKKG (134 aa).

This sequence in the N-terminal section; belongs to the carbohydrate kinase PfkB family. The protein in the C-terminal section; belongs to the cytidylyltransferase family. Homodimer.

The enzyme catalyses D-glycero-beta-D-manno-heptose 7-phosphate + ATP = D-glycero-beta-D-manno-heptose 1,7-bisphosphate + ADP + H(+). The catalysed reaction is D-glycero-beta-D-manno-heptose 1-phosphate + ATP + H(+) = ADP-D-glycero-beta-D-manno-heptose + diphosphate. The protein operates within nucleotide-sugar biosynthesis; ADP-L-glycero-beta-D-manno-heptose biosynthesis; ADP-L-glycero-beta-D-manno-heptose from D-glycero-beta-D-manno-heptose 7-phosphate: step 1/4. Its pathway is nucleotide-sugar biosynthesis; ADP-L-glycero-beta-D-manno-heptose biosynthesis; ADP-L-glycero-beta-D-manno-heptose from D-glycero-beta-D-manno-heptose 7-phosphate: step 3/4. In terms of biological role, catalyzes the phosphorylation of D-glycero-D-manno-heptose 7-phosphate at the C-1 position to selectively form D-glycero-beta-D-manno-heptose-1,7-bisphosphate. Functionally, catalyzes the ADP transfer from ATP to D-glycero-beta-D-manno-heptose 1-phosphate, yielding ADP-D-glycero-beta-D-manno-heptose. The chain is Bifunctional protein HldE from Escherichia fergusonii (strain ATCC 35469 / DSM 13698 / CCUG 18766 / IAM 14443 / JCM 21226 / LMG 7866 / NBRC 102419 / NCTC 12128 / CDC 0568-73).